A 105-amino-acid chain; its full sequence is Phosphoribosyl-ATP pyrophosphatase (105 aa).

The protein belongs to the PRA-PH family.

The protein localises to the cytoplasm. It carries out the reaction 1-(5-phospho-beta-D-ribosyl)-ATP + H2O = 1-(5-phospho-beta-D-ribosyl)-5'-AMP + diphosphate + H(+). The protein operates within amino-acid biosynthesis; L-histidine biosynthesis; L-histidine from 5-phospho-alpha-D-ribose 1-diphosphate: step 2/9. This is Phosphoribosyl-ATP pyrophosphatase from Roseobacter denitrificans (strain ATCC 33942 / OCh 114) (Erythrobacter sp. (strain OCh 114)).